Here is a 1256-residue protein sequence, read N- to C-terminus: Bifunctional autolysin (1256 aa).

The first 29 residues, 1–29 (MAKKFNYKLPSMVALTLVGSAVTAHQVQA), serve as a signal peptide directing secretion. Polar residues predominate over residues 103 to 138 (GDTRANQSATTNNTQPVAKSTSTTAPKTNTNVTNAG). Disordered regions lie at residues 103–151 (GDTR…NSEN), 172–214 (KTAA…KTSL), and 419–440 (TQST…PSTG). 2 stretches are compositionally biased toward low complexity: residues 172–196 (KTAA…KVTT) and 421–439 (STTT…KPST). The interval 199-775 (ASAQPRSVAA…AVAQPKTAVK (577 aa)) is N-acetylmuramoyl-L-alanine amidase. GW domains are found at residues 443–517 (TVAA…YNTA), 519–593 (SPVN…DTAK), 612–686 (TVSS…YNNA), 688–762 (SPVN…VPAA), 784–859 (TTQT…VQNL), 861–936 (KEVK…APTA), and 943–1017 (AAKD…KELI). Residues 776 to 1256 (AYTVTKPQTT…GKYFDIPQYK (481 aa)) are endo-beta-N-acetylglucosaminidase.

The protein in the N-terminal section; belongs to the N-acetylmuramoyl-L-alanine amidase 2 family. It in the C-terminal section; belongs to the glycosyl hydrolase 73 family. As to quaternary structure, oligomer; forms a ring structure at the cell surface which is important for efficient partitioning of daughter cells after cell division. In terms of processing, undergoes proteolytic processing to generate the two extracellular lytic enzymes, probably at the septal region on the cell surface.

Its subcellular location is the secreted. It catalyses the reaction Hydrolyzes the link between N-acetylmuramoyl residues and L-amino acid residues in certain cell-wall glycopeptides.. The catalysed reaction is an N(4)-(oligosaccharide-(1-&gt;3)-[oligosaccharide-(1-&gt;6)]-beta-D-Man-(1-&gt;4)-beta-D-GlcNAc-(1-&gt;4)-alpha-D-GlcNAc)-L-asparaginyl-[protein] + H2O = an oligosaccharide-(1-&gt;3)-[oligosaccharide-(1-&gt;6)]-beta-D-Man-(1-&gt;4)-D-GlcNAc + N(4)-(N-acetyl-beta-D-glucosaminyl)-L-asparaginyl-[protein]. Endohydrolysis of the di-N-acetylchitobiosyl unit in high-mannose glycopeptides and glycoproteins containing the -[(Man)5(GlcNAc)2]-Asn structure. One N-acetyl-D-glucosamine residue remains attached to the protein; the rest of the oligosaccharide is released intact. Cleaves the peptidoglycan connecting the daughter cells at the end of the cell division cycle, resulting in the separation of the two newly divided cells. Acts as an autolysin in penicillin-induced lysis. The protein is Bifunctional autolysin (atl) of Staphylococcus aureus (strain NCTC 8325 / PS 47).